The chain runs to 50 residues: uncharacterized protein (50 aa).

This is an uncharacterized protein from Bacillus subtilis (Bacteriophage phi-105).